Here is a 551-residue protein sequence, read N- to C-terminus: Arginine--tRNA ligase (551 aa).

The 'HIGH' region signature appears at 123–133; that stretch reads ANPTGPLTIGR.

It belongs to the class-I aminoacyl-tRNA synthetase family. As to quaternary structure, monomer.

Its subcellular location is the cytoplasm. The enzyme catalyses tRNA(Arg) + L-arginine + ATP = L-arginyl-tRNA(Arg) + AMP + diphosphate. The sequence is that of Arginine--tRNA ligase from Chlorobaculum tepidum (strain ATCC 49652 / DSM 12025 / NBRC 103806 / TLS) (Chlorobium tepidum).